Reading from the N-terminus, the 158-residue chain is Small ribosomal subunit protein uS19 (158 aa).

It belongs to the universal ribosomal protein uS19 family.

Its function is as follows. Protein S19 forms a complex with S13 that binds strongly to the 16S ribosomal RNA. This is Small ribosomal subunit protein uS19 from Pyrobaculum calidifontis (strain DSM 21063 / JCM 11548 / VA1).